The sequence spans 204 residues: dTTP/UTP pyrophosphatase (204 aa).

The active-site Proton acceptor is the Asp-76.

Belongs to the Maf family. YhdE subfamily. It depends on a divalent metal cation as a cofactor.

Its subcellular location is the cytoplasm. The catalysed reaction is dTTP + H2O = dTMP + diphosphate + H(+). The enzyme catalyses UTP + H2O = UMP + diphosphate + H(+). Nucleoside triphosphate pyrophosphatase that hydrolyzes dTTP and UTP. May have a dual role in cell division arrest and in preventing the incorporation of modified nucleotides into cellular nucleic acids. This is dTTP/UTP pyrophosphatase from Salinibacter ruber (strain DSM 13855 / M31).